The sequence spans 299 residues: Ribosomal RNA small subunit methyltransferase H (299 aa).

S-adenosyl-L-methionine is bound by residues 35–37 (GGH), Asp-54, Tyr-80, Asp-101, and Gln-108.

It belongs to the methyltransferase superfamily. RsmH family.

It is found in the cytoplasm. It catalyses the reaction cytidine(1402) in 16S rRNA + S-adenosyl-L-methionine = N(4)-methylcytidine(1402) in 16S rRNA + S-adenosyl-L-homocysteine + H(+). Specifically methylates the N4 position of cytidine in position 1402 (C1402) of 16S rRNA. This is Ribosomal RNA small subunit methyltransferase H from Coprothermobacter proteolyticus (strain ATCC 35245 / DSM 5265 / OCM 4 / BT).